We begin with the raw amino-acid sequence, 458 residues long: MASNTVSAQGGSNRPVRDFSNIQDVAQFLLFDPIWNEQPGSIVPWKMNREQALAERYPELQTSEPSEDYSGPVESLELLPLEIKLDIMQYLSWEQISWCKHPWLWTRWYKDNVVRVSAITFEDFQREYAFPEKIQEIHFTDTRAEEIKAILETTPNVTRLVIRRIDDMNYNTHGDLGLDDLEFLTHLMVEDACGFTDFWAPSLTHLTIKNLDMHPRWFGPVMDGIKSMQSTLKYLYIFETYGVNKPFVQWCTDNIETFYCTNSYRYENVPRPIYVWVLFQEDEWHGYRVEDNKFHRRYMYSTILHKRDTDWVENNPLKTPAQVEMYKFLLRISQLNRDGTGYESDSDPENEHFDDESFSSGEEDSSDEDDPTWAPDSDDSDWETETEEEPSVAARILEKGKLTITNLMKSLGFKPKPKKIQSIDRYFCSLDSNYNSEDEDFEYDSDSEDDDSDSEDDC.

Disordered regions lie at residues G339–L397 and Y434–C458. Composition is skewed to acidic residues over residues S344 to P390 and S436 to C458.

This is an uncharacterized protein from Invertebrate iridescent virus 3 (IIV-3).